Here is a 130-residue protein sequence, read N- to C-terminus: Lysozyme C (130 aa).

A C-type lysozyme domain is found at 1–130 (KVWERCALAR…VEQYVEGCDL (130 aa)). Intrachain disulfides connect cysteine 6-cysteine 128, cysteine 30-cysteine 116, cysteine 65-cysteine 81, and cysteine 77-cysteine 95. Residues glutamate 35 and aspartate 53 contribute to the active site.

The protein belongs to the glycosyl hydrolase 22 family. In terms of assembly, monomer.

It carries out the reaction Hydrolysis of (1-&gt;4)-beta-linkages between N-acetylmuramic acid and N-acetyl-D-glucosamine residues in a peptidoglycan and between N-acetyl-D-glucosamine residues in chitodextrins.. Lysozymes have primarily a bacteriolytic function; those in tissues and body fluids are associated with the monocyte-macrophage system and enhance the activity of immunoagents. This chain is Lysozyme C (LYZ), found in Camelus dromedarius (Dromedary).